The primary structure comprises 234 residues: MAVGKNKRISKGKKGGKKKAADPFAKKDWYDIKAPSIFSVRNVGKTLVSRTQGTKIASEGLKHRVFEISLADLQNDEDHAYRKIRLRAEDVQGKNVLTNFWGMDFTTDKLRSLVRKWQTLIEAHVDVKTTDNYTLRMFCIAFTKKRQNQNKKTSYAQSSQIRQIRRKMREIMTTQAASCDLKELVRKFIPEMIGREIEKATSSIYPLQNVFIRKVKILKAPKFDLGKLMEACSW.

The span at 1-18 (MAVGKNKRISKGKKGGKK) shows a compositional bias: basic residues. A disordered region spans residues 1–20 (MAVGKNKRISKGKKGGKKKA).

The protein belongs to the eukaryotic ribosomal protein eS1 family. Component of the small ribosomal subunit. Mature ribosomes consist of a small (40S) and a large (60S) subunit. The 40S subunit contains about 33 different proteins and 1 molecule of RNA (18S). The 60S subunit contains about 49 different proteins and 3 molecules of RNA (25S, 5.8S and 5S).

Its subcellular location is the cytoplasm. This chain is Small ribosomal subunit protein eS1y, found in Vitis vinifera (Grape).